Reading from the N-terminus, the 210-residue chain is Thymidylate kinase (210 aa).

10-17 contributes to the ATP binding site; it reads GLEGAGKS.

The protein belongs to the thymidylate kinase family.

It carries out the reaction dTMP + ATP = dTDP + ADP. Phosphorylation of dTMP to form dTDP in both de novo and salvage pathways of dTTP synthesis. The chain is Thymidylate kinase from Haemophilus influenzae (strain PittGG).